Here is a 298-residue protein sequence, read N- to C-terminus: 4-hydroxy-tetrahydrodipicolinate synthase (298 aa).

Threonine 48 contacts pyruvate. Residue tyrosine 137 is the Proton donor/acceptor of the active site. The active-site Schiff-base intermediate with substrate is the lysine 166. Isoleucine 207 lines the pyruvate pocket.

It belongs to the DapA family. Homotetramer; dimer of dimers.

The protein resides in the cytoplasm. The enzyme catalyses L-aspartate 4-semialdehyde + pyruvate = (2S,4S)-4-hydroxy-2,3,4,5-tetrahydrodipicolinate + H2O + H(+). Its pathway is amino-acid biosynthesis; L-lysine biosynthesis via DAP pathway; (S)-tetrahydrodipicolinate from L-aspartate: step 3/4. Its function is as follows. Catalyzes the condensation of (S)-aspartate-beta-semialdehyde [(S)-ASA] and pyruvate to 4-hydroxy-tetrahydrodipicolinate (HTPA). This is 4-hydroxy-tetrahydrodipicolinate synthase from Campylobacter jejuni subsp. jejuni serotype O:2 (strain ATCC 700819 / NCTC 11168).